The primary structure comprises 338 residues: MNSLVIQTTIVLVSVISVSIVHAGNIPAVIAFGDSILDTGNNNYLMTLTKVNFYPYGRDFVTRRATGRFGNGRIPTDLIAEGLGIKNIVPAYRSPFLEPNDILTGVSFASGGSGLDPMTARIQGVIWVPDQLNDFKAYIAKLNSITGDEEKTRSIISNAVFVISAGNNDIAITYFTNPIRNTRYTIFSYTDLMVSWTQSFIKELYNLGARKFAIMGTLPLGCLPGASNALGGLCLEPANAVARLFNRKLADEVNNLNSMLPGSRSIYVDMYNPLLELVKNPLRSGFISPTRPCCCAPAAPIPCLDASRYVFWDIAHPSEKAYQTIIPPIIQQIQQSFA.

A signal peptide spans 1-23; the sequence is MNSLVIQTTIVLVSVISVSIVHA. The Nucleophile role is filled by S35. Active-site residues include D313 and H316.

This sequence belongs to the 'GDSL' lipolytic enzyme family.

It is found in the secreted. The polypeptide is GDSL esterase/lipase At5g63170 (Arabidopsis thaliana (Mouse-ear cress)).